Reading from the N-terminus, the 155-residue chain is Endoribonuclease YbeY (155 aa).

Residues H120, H124, and H130 each coordinate Zn(2+).

The protein belongs to the endoribonuclease YbeY family. The cofactor is Zn(2+).

Its subcellular location is the cytoplasm. Its function is as follows. Single strand-specific metallo-endoribonuclease involved in late-stage 70S ribosome quality control and in maturation of the 3' terminus of the 16S rRNA. The protein is Endoribonuclease YbeY of Staphylococcus aureus (strain Mu3 / ATCC 700698).